The primary structure comprises 540 residues: SNW/SKI-interacting protein B (540 aa).

4 disordered regions span residues 1-106 (MVLR…SLTV), 215-273 (GETQ…NPKG), 351-402 (GAAP…RDRD), and 502-526 (ASVA…DPFH). Composition is skewed to basic and acidic residues over residues 16 to 29 (PHDH…KERY) and 83 to 94 (MGRRGGDGDGEQ). The interval 189-353 (PEFIKYTPAR…KARAEMLGAA (165 aa)) is SNW. The segment covering 236 to 251 (AGSPPVPVLRSPPRPP) has biased composition (pro residues). Over residues 359–382 (ERSKAAAERDAIREERRRERRLEA) the composition is skewed to basic and acidic residues. The segment covering 383 to 393 (RAAAAAASKKS) has biased composition (low complexity).

The protein belongs to the SNW family.

The protein resides in the nucleus. The polypeptide is SNW/SKI-interacting protein B (Oryza sativa subsp. japonica (Rice)).